Consider the following 287-residue polypeptide: Protease HtpX (287 aa).

2 helical membrane-spanning segments follow: residues 4-24 and 33-53; these read IFLL…VMSI and GGLL…SLAI. Histidine 139 provides a ligand contact to Zn(2+). Glutamate 140 is a catalytic residue. Histidine 143 is a binding site for Zn(2+). The next 2 helical transmembrane spans lie at 154-174 and 195-215; these read LIQG…AGII and AVVF…VAYF. Glutamate 220 provides a ligand contact to Zn(2+).

Belongs to the peptidase M48B family. Zn(2+) serves as cofactor.

It localises to the cell inner membrane. The polypeptide is Protease HtpX (Shewanella putrefaciens (strain CN-32 / ATCC BAA-453)).